The following is a 500-amino-acid chain: Lysine--tRNA ligase (500 aa).

Positions 410 and 417 each coordinate Mg(2+).

The protein belongs to the class-II aminoacyl-tRNA synthetase family. Homodimer. Mg(2+) is required as a cofactor.

The protein localises to the cytoplasm. The catalysed reaction is tRNA(Lys) + L-lysine + ATP = L-lysyl-tRNA(Lys) + AMP + diphosphate. This Shewanella frigidimarina (strain NCIMB 400) protein is Lysine--tRNA ligase.